We begin with the raw amino-acid sequence, 227 residues long: Broad specificity amino-acid racemase RacX (227 aa).

Substrate is bound at residue 51–53; sequence DRP. C82 functions as the Proton donor/acceptor in the catalytic mechanism. Residues 83–85 and K161 contribute to the substrate site; that span reads NTA. The active-site Proton donor/acceptor is the C191.

Belongs to the aspartate/glutamate racemases family. In terms of assembly, homodimer.

It carries out the reaction an L-alpha-amino acid = a D-alpha-amino acid. It catalyses the reaction (2S,6S)-2,6-diaminopimelate = meso-2,6-diaminopimelate. The catalysed reaction is L-lysine = D-lysine. The enzyme catalyses L-arginine = D-arginine. It carries out the reaction L-ornithine = D-ornithine. It catalyses the reaction L-histidine = D-histidine. The catalysed reaction is L-alanine = D-alanine. The enzyme catalyses L-tyrosine = D-tyrosine. It carries out the reaction L-phenylalanine = D-phenylalanine. It catalyses the reaction L-serine = D-serine. The catalysed reaction is L-glutamine = D-glutamine. The enzyme catalyses L-methionine = D-methionine. It carries out the reaction L-asparagine = D-asparagine. It catalyses the reaction L-homoserine = D-homoserine. Amino-acid racemase able to utilize a broad range of substrates. Preferentially catalyzes the epimerization of LL-diaminopimelate, as well as the racemization of D-lysine, L-arginine, L-ornithine, L-lysine and D-arginine. Has lower activity against D-ornithine, L-histidine, L-alanine, L-tyrosine, L-phenylalanine, L-serine, L-glutamine, L-methionine, L-asparagine and L-homoserine. Has weak activity against L-norleucine, L-aminobutyric acid and L-norvaline. Has no activity toward nine L-amino acids (Thr, Glu, Asp, Val, Leu, Ile, Trp, Cit and Aad). D-amino acids might be used as components of peptidoglycan and/or be involved in peptidoglycan metabolism and remodeling. This chain is Broad specificity amino-acid racemase RacX (racX), found in Bacillus subtilis (strain 168).